A 339-amino-acid chain; its full sequence is Extracellular matrix protein-binding protein emp (339 aa).

The signal sequence occupies residues methionine 1–alanine 26.

It is found in the cell surface. Adhesin that binds to the host cell extracellular matrix proteins fibronectin, fibrinogen, collagen, and vitronectin. The protein is Extracellular matrix protein-binding protein emp (emp) of Staphylococcus aureus (strain bovine RF122 / ET3-1).